We begin with the raw amino-acid sequence, 365 residues long: Cobalt-precorrin-5B C(1)-methyltransferase (365 aa).

The protein belongs to the CbiD family.

The catalysed reaction is Co-precorrin-5B + S-adenosyl-L-methionine = Co-precorrin-6A + S-adenosyl-L-homocysteine. Its pathway is cofactor biosynthesis; adenosylcobalamin biosynthesis; cob(II)yrinate a,c-diamide from sirohydrochlorin (anaerobic route): step 6/10. Its function is as follows. Catalyzes the methylation of C-1 in cobalt-precorrin-5B to form cobalt-precorrin-6A. In Moorella thermoacetica (strain ATCC 39073 / JCM 9320), this protein is Cobalt-precorrin-5B C(1)-methyltransferase.